Consider the following 359-residue polypeptide: E2F transcription factor-like E2FD (359 aa).

DNA-binding regions lie at residues 13 to 78 (RKDK…SWKG) and 138 to 217 (RKER…RWLG). Disordered regions lie at residues 255 to 274 (RNKS…QNTS) and 288 to 313 (DVKN…NNIR). Residues 293-309 (ASGSSTPAGTSESNDMG) are compositionally biased toward polar residues.

It belongs to the E2F/DP family. In terms of assembly, monomer. No interactions with DPA or E2FA. In terms of tissue distribution, preferentially expressed in proliferating tissues. Highly expressed in young stalk and young flowers. Lower expression in young leaves and mature flowers. Detected in cotyledonary vascular tissues, the shoot apical meristem, the base of trichomes, the fully developed stomata, the central root cylinder and in the columella of lateral roots but not in the primary root tips or in the leaf epidermal cells.

It localises to the nucleus. Functionally, inhibitor of E2F-dependent regulation of gene expression. Binds specifically the E2 recognition site as a monomer without interacting with DP proteins. May be up-regulating E2FA and down-regulating repressors of cell cycle progression. Promotes cell proliferation and represses cell elongation. Regulated by proteolysis via a ubiquitin-proteasome pathway. The sequence is that of E2F transcription factor-like E2FD (E2FD) from Arabidopsis thaliana (Mouse-ear cress).